Here is a 40-residue protein sequence, read N- to C-terminus: Chaperonin HSP60, mitochondrial (40 aa).

The protein belongs to the chaperonin (HSP60) family.

Its subcellular location is the mitochondrion. In terms of biological role, implicated in mitochondrial protein import and macromolecular assembly. May facilitate the correct folding of imported proteins. May also prevent misfolding and promote the refolding and proper assembly of unfolded polypeptides generated under stress conditions in the mitochondrial matrix. This Solanum tuberosum (Potato) protein is Chaperonin HSP60, mitochondrial.